The chain runs to 1266 residues: TBC1 domain family member 9 (1266 aa).

GRAM domains are found at residues 146–213 (VKFH…EKNA) and 293–361 (ERYR…EKAD). Residues 415-456 (SYNSSDDEVYSRPSSLVSSSPQRSTSSDADGERQFNLNGNSV) are disordered. A compositionally biased stretch (low complexity) spans 425–441 (SRPSSLVSSSPQRSTSS). Positions 515–702 (GIPESMRGEL…VVVDCFFYEG (188 aa)) constitute a Rab-GAP TBC domain. One can recognise an EF-hand domain in the interval 886–921 (HSDVLASRLFQLLDENGDSLINFREFVSGLSAACHG). 2 disordered regions span residues 1075–1095 (AKEG…PGVL) and 1132–1164 (DIKL…SMSS).

In terms of biological role, may act as a GTPase-activating protein for Rab family protein(s). The protein is TBC1 domain family member 9 (TBC1D9) of Homo sapiens (Human).